A 122-amino-acid chain; its full sequence is MIQMQSILQVADNTGARSLMCIKVLGGSKRRYAGIGDIIKVSVKDVAPRGRVKKGEVYNAVVVRTSKGVRRADGSLIKFDGNAAVLLNAKLEPIGTRIFGPVTRELRTARFMKIVSLAPEVL.

The protein belongs to the universal ribosomal protein uL14 family. In terms of assembly, part of the 50S ribosomal subunit. Forms a cluster with proteins L3 and L19. In the 70S ribosome, L14 and L19 interact and together make contacts with the 16S rRNA in bridges B5 and B8.

Functionally, binds to 23S rRNA. Forms part of two intersubunit bridges in the 70S ribosome. The protein is Large ribosomal subunit protein uL14 of Nitrosospira multiformis (strain ATCC 25196 / NCIMB 11849 / C 71).